The primary structure comprises 334 residues: Putative B3 domain-containing protein At3g49610 (334 aa).

Disordered stretches follow at residues 69–89 (ERRT…GSEK) and 133–178 (DEFE…KFDP). Composition is skewed to polar residues over residues 73-84 (LGSSPTKTNTLF) and 141-157 (KSPT…SCLM). The span at 161 to 173 (KRKRYQSSGKSKK) shows a compositional bias: basic residues. A DNA-binding region (TF-B3) is located at residues 229 to 334 (FNKLLRNDFL…GVLCFALEKE (106 aa)).

Its subcellular location is the nucleus. This is Putative B3 domain-containing protein At3g49610 from Arabidopsis thaliana (Mouse-ear cress).